The primary structure comprises 356 residues: Homoserine O-acetyltransferase (356 aa).

One can recognise an AB hydrolase-1 domain in the interval 50–335 (NVILVCHALT…DEPYGHDAFL (286 aa)). S146 (nucleophile) is an active-site residue. R215 is a binding site for substrate. Residues D302 and H331 contribute to the active site. Residue D332 coordinates substrate.

It belongs to the AB hydrolase superfamily. MetX family. As to quaternary structure, homodimer.

The protein resides in the cytoplasm. The enzyme catalyses L-homoserine + acetyl-CoA = O-acetyl-L-homoserine + CoA. It participates in amino-acid biosynthesis; L-methionine biosynthesis via de novo pathway; O-acetyl-L-homoserine from L-homoserine: step 1/1. Transfers an acetyl group from acetyl-CoA to L-homoserine, forming acetyl-L-homoserine. The chain is Homoserine O-acetyltransferase from Chlorobaculum parvum (strain DSM 263 / NCIMB 8327) (Chlorobium vibrioforme subsp. thiosulfatophilum).